The sequence spans 149 residues: 3-dehydroquinate dehydratase (149 aa).

Catalysis depends on Tyr26, which acts as the Proton acceptor. Residues Asn77, His83, and Asp90 each coordinate substrate. Residue His103 is the Proton donor of the active site. Residues 104-105 (LS) and Arg114 contribute to the substrate site.

The protein belongs to the type-II 3-dehydroquinase family. In terms of assembly, homododecamer.

It catalyses the reaction 3-dehydroquinate = 3-dehydroshikimate + H2O. It participates in metabolic intermediate biosynthesis; chorismate biosynthesis; chorismate from D-erythrose 4-phosphate and phosphoenolpyruvate: step 3/7. Functionally, catalyzes a trans-dehydration via an enolate intermediate. This Aliivibrio fischeri (strain MJ11) (Vibrio fischeri) protein is 3-dehydroquinate dehydratase.